Consider the following 611-residue polypeptide: Putative type II restriction enzyme HgiDII (611 aa).

Over residues 355 to 364 the composition is skewed to basic and acidic residues; it reads YPSNPKKEEV. Residues 355-434 are disordered; that stretch reads YPSNPKKEEV…PEPSPPPKQE (80 aa). The span at 381–409 shows a compositional bias: low complexity; it reads TNASSDSSTATENASSDSSTATENASSET. Repeat copies occupy residues 382-392 and 393-403. Residues 382-403 are 2.5 X 11 AA tandem repeats; sequence NASSDSSTATENASSDSSTATE. The stretch at 404 to 409 is one 3; truncated repeat; sequence NASSET. Acidic residues predominate over residues 410–425; the sequence is NDGEVEDNSFFDDDIP.

It carries out the reaction Endonucleolytic cleavage of DNA to give specific double-stranded fragments with terminal 5'-phosphates.. According to REBASE this is a P subtype restriction enzyme that recognizes the double-stranded sequence 5'-GTCGAC-3' and cleaves after G-1. No restriction activity was detected upon overexpressing this protein in E.coli. In Herpetosiphon aurantiacus (Herpetosiphon giganteus), this protein is Putative type II restriction enzyme HgiDII.